Here is a 176-residue protein sequence, read N- to C-terminus: NAD(P)H-quinone oxidoreductase subunit J (176 aa).

Belongs to the complex I 30 kDa subunit family. As to quaternary structure, NDH-1 can be composed of about 15 different subunits; different subcomplexes with different compositions have been identified which probably have different functions.

It is found in the cell inner membrane. The enzyme catalyses a plastoquinone + NADH + (n+1) H(+)(in) = a plastoquinol + NAD(+) + n H(+)(out). It catalyses the reaction a plastoquinone + NADPH + (n+1) H(+)(in) = a plastoquinol + NADP(+) + n H(+)(out). NDH-1 shuttles electrons from an unknown electron donor, via FMN and iron-sulfur (Fe-S) centers, to quinones in the respiratory and/or the photosynthetic chain. The immediate electron acceptor for the enzyme in this species is believed to be plastoquinone. Couples the redox reaction to proton translocation, and thus conserves the redox energy in a proton gradient. Cyanobacterial NDH-1 also plays a role in inorganic carbon-concentration. This is NAD(P)H-quinone oxidoreductase subunit J from Gloeobacter violaceus (strain ATCC 29082 / PCC 7421).